The chain runs to 261 residues: Probable glutathione-independent glyoxalase hsp3103 (261 aa).

Catalysis depends on residues Cys162, His163, and Glu196.

Belongs to the peptidase C56 family. HSP31-like subfamily.

It carries out the reaction methylglyoxal + H2O = (R)-lactate + H(+). Its function is as follows. Catalyzes the conversion of methylglyoxal (MG) to D-lactate in a single glutathione (GSH)-independent step. May play a role in detoxifying endogenously produced glyoxals. Involved in protection against reactive oxygen species (ROS). This is Probable glutathione-independent glyoxalase hsp3103 from Schizosaccharomyces pombe (strain 972 / ATCC 24843) (Fission yeast).